Consider the following 616-residue polypeptide: Dihydroxy-acid dehydratase (616 aa).

A Mg(2+)-binding site is contributed by D81. C122 contributes to the [2Fe-2S] cluster binding site. Residues D123 and K124 each coordinate Mg(2+). At K124 the chain carries N6-carboxylysine. C195 serves as a coordination point for [2Fe-2S] cluster. Residue E491 coordinates Mg(2+). S517 serves as the catalytic Proton acceptor.

Belongs to the IlvD/Edd family. As to quaternary structure, homodimer. The cofactor is [2Fe-2S] cluster. It depends on Mg(2+) as a cofactor.

It catalyses the reaction (2R)-2,3-dihydroxy-3-methylbutanoate = 3-methyl-2-oxobutanoate + H2O. The enzyme catalyses (2R,3R)-2,3-dihydroxy-3-methylpentanoate = (S)-3-methyl-2-oxopentanoate + H2O. It functions in the pathway amino-acid biosynthesis; L-isoleucine biosynthesis; L-isoleucine from 2-oxobutanoate: step 3/4. The protein operates within amino-acid biosynthesis; L-valine biosynthesis; L-valine from pyruvate: step 3/4. Its function is as follows. Functions in the biosynthesis of branched-chain amino acids. Catalyzes the dehydration of (2R,3R)-2,3-dihydroxy-3-methylpentanoate (2,3-dihydroxy-3-methylvalerate) into 2-oxo-3-methylpentanoate (2-oxo-3-methylvalerate) and of (2R)-2,3-dihydroxy-3-methylbutanoate (2,3-dihydroxyisovalerate) into 2-oxo-3-methylbutanoate (2-oxoisovalerate), the penultimate precursor to L-isoleucine and L-valine, respectively. This chain is Dihydroxy-acid dehydratase, found in Shewanella loihica (strain ATCC BAA-1088 / PV-4).